The chain runs to 360 residues: Cyclin-dependent kinase 10 (360 aa).

The 285-residue stretch at 39–323 folds into the Protein kinase domain; the sequence is FEKLNRIGEG…SGDCLESSYF (285 aa). ATP is bound by residues 45-53 and lysine 68; that span reads IGEGTYGIV. Residue aspartate 163 is the Proton acceptor of the active site. Threonine 196 is subject to Phosphothreonine. The tract at residues 334–360 is disordered; it reads LMPTFPHHRNKRAAPAAAEGQSKRCRP.

The protein belongs to the protein kinase superfamily. CMGC Ser/Thr protein kinase family. CDC2/CDKX subfamily. As to quaternary structure, heterodimer with CCNQ, the interaction is required for kinase activity. Interacts with ETS2. Interacts with PRK2.

Its subcellular location is the cytoplasm. It is found in the cytoskeleton. The protein localises to the cilium basal body. The catalysed reaction is L-seryl-[protein] + ATP = O-phospho-L-seryl-[protein] + ADP + H(+). The enzyme catalyses L-threonyl-[protein] + ATP = O-phospho-L-threonyl-[protein] + ADP + H(+). In terms of biological role, cyclin-dependent kinase that phosphorylates the transcription factor ETS2 (in vitro) and positively controls its proteasomal degradation (in cells). Involved in the regulation of actin cytoskeleton organization through the phosphorylation of actin dynamics regulators such as PKN2. Is a negative regulator of ciliogenesis through phosphorylation of PKN2 and promotion of RhoA signaling. This is Cyclin-dependent kinase 10 (Cdk10) from Mus musculus (Mouse).